The following is a 729-amino-acid chain: DNA topoisomerase 3 (729 aa).

The Toprim domain occupies 3-136; the sequence is KSVVIAEKPS…IKRLWISSVT (134 aa). Mg(2+) contacts are provided by Glu-9 and Asp-105. Residues 153–594 form the Topo IA-type catalytic domain; the sequence is YDNLYASAVA…EMKNYTKEIV (442 aa). The tract at residues 187 to 192 is interaction with DNA; it reads NCGRVQ. The active-site O-(5'-phospho-DNA)-tyrosine intermediate is the Tyr-310. Residues 686–713 show a composition bias toward basic and acidic residues; the sequence is ERRKKESGNKADKRDVQKYMKQQNKEEE. Residues 686-719 are disordered; that stretch reads ERRKKESGNKADKRDVQKYMKQQNKEEEPLNNPF.

The protein belongs to the type IA topoisomerase family. Mg(2+) is required as a cofactor.

The enzyme catalyses ATP-independent breakage of single-stranded DNA, followed by passage and rejoining.. Its function is as follows. Releases the supercoiling and torsional tension of DNA, which is introduced during the DNA replication and transcription, by transiently cleaving and rejoining one strand of the DNA duplex. Introduces a single-strand break via transesterification at a target site in duplex DNA. The scissile phosphodiester is attacked by the catalytic tyrosine of the enzyme, resulting in the formation of a DNA-(5'-phosphotyrosyl)-enzyme intermediate and the expulsion of a 3'-OH DNA strand. The free DNA strand then undergoes passage around the unbroken strand, thus removing DNA supercoils. Finally, in the religation step, the DNA 3'-OH attacks the covalent intermediate to expel the active-site tyrosine and restore the DNA phosphodiester backbone. The chain is DNA topoisomerase 3 from Bacillus cereus (strain ATCC 14579 / DSM 31 / CCUG 7414 / JCM 2152 / NBRC 15305 / NCIMB 9373 / NCTC 2599 / NRRL B-3711).